Reading from the N-terminus, the 317-residue chain is OVARIAN TUMOR DOMAIN-containing deubiquitinating enzyme 4 (317 aa).

Residues 168-306 (YSIIGIPGDG…FGHYDALLLH (139 aa)) enclose the OTU domain. D176 is a catalytic residue. Residue C179 is the Nucleophile of the active site. Residue H299 is part of the active site.

This sequence belongs to the peptidase C65 family.

It is found in the cytoplasm. The catalysed reaction is Thiol-dependent hydrolysis of ester, thioester, amide, peptide and isopeptide bonds formed by the C-terminal Gly of ubiquitin (a 76-residue protein attached to proteins as an intracellular targeting signal).. Functionally, hydrolase that can remove conjugated ubiquitin from proteins in vitro and may therefore play an important regulatory role at the level of protein turnover by preventing degradation. Cysteine protease with a preference for 'Lys-63' over 'Lys-48'-linked over 'Met-1' ubiquitin (UB) tetramers (e.g. Ub3 and Ub4) as substrates. Also cleaves RUB-GST fusion. This is OVARIAN TUMOR DOMAIN-containing deubiquitinating enzyme 4 from Arabidopsis thaliana (Mouse-ear cress).